Consider the following 83-residue polypeptide: uncharacterized protein (83 aa).

It belongs to the chlamydial CPn_0710/CT_666/TC_0037 family.

This is an uncharacterized protein from Chlamydia trachomatis serovar D (strain ATCC VR-885 / DSM 19411 / UW-3/Cx).